The primary structure comprises 424 residues: Protein SamB (424 aa).

The region spanning 2–189 is the UmuC domain; the sequence is FALADVNSFY…QPVEEIWGVG (188 aa).

Belongs to the DNA polymerase type-Y family.

Involved in UV protection and mutation. The chain is Protein SamB (samB) from Salmonella typhimurium.